A 552-amino-acid polypeptide reads, in one-letter code: CTP synthase (552 aa).

The amidoligase domain stretch occupies residues M1–L270. S13 serves as a coordination point for CTP. S13 is a binding site for UTP. Residues S14 to I19 and D71 each bind ATP. Residues D71 and E144 each contribute to the Mg(2+) site. CTP-binding positions include D151–E153, K191–Q196, and K227. UTP is bound by residues K191–Q196 and K227. Residues Q295–P548 form the Glutamine amidotransferase type-1 domain. Residue G357 participates in L-glutamine binding. C384 functions as the Nucleophile; for glutamine hydrolysis in the catalytic mechanism. Residues L385 to Q388, E408, and R474 each bind L-glutamine. Catalysis depends on residues H521 and E523.

The protein belongs to the CTP synthase family. As to quaternary structure, homotetramer.

It carries out the reaction UTP + L-glutamine + ATP + H2O = CTP + L-glutamate + ADP + phosphate + 2 H(+). The catalysed reaction is L-glutamine + H2O = L-glutamate + NH4(+). The enzyme catalyses UTP + NH4(+) + ATP = CTP + ADP + phosphate + 2 H(+). It participates in pyrimidine metabolism; CTP biosynthesis via de novo pathway; CTP from UDP: step 2/2. With respect to regulation, allosterically activated by GTP, when glutamine is the substrate; GTP has no effect on the reaction when ammonia is the substrate. The allosteric effector GTP functions by stabilizing the protein conformation that binds the tetrahedral intermediate(s) formed during glutamine hydrolysis. Inhibited by the product CTP, via allosteric rather than competitive inhibition. Its function is as follows. Catalyzes the ATP-dependent amination of UTP to CTP with either L-glutamine or ammonia as the source of nitrogen. Regulates intracellular CTP levels through interactions with the four ribonucleotide triphosphates. The chain is CTP synthase from Acidovorax ebreus (strain TPSY) (Diaphorobacter sp. (strain TPSY)).